The sequence spans 201 residues: Large ribosomal subunit protein uL4 (201 aa).

A disordered region spans residues 43-73 (SRGQKTRAEVTGSGKKPWRQKGTGRARSGSV).

It belongs to the universal ribosomal protein uL4 family. Part of the 50S ribosomal subunit.

Functionally, one of the primary rRNA binding proteins, this protein initially binds near the 5'-end of the 23S rRNA. It is important during the early stages of 50S assembly. It makes multiple contacts with different domains of the 23S rRNA in the assembled 50S subunit and ribosome. Its function is as follows. Forms part of the polypeptide exit tunnel. This chain is Large ribosomal subunit protein uL4, found in Sodalis glossinidius (strain morsitans).